The following is a 509-amino-acid chain: 2,3-bisphosphoglycerate-independent phosphoglycerate mutase (509 aa).

Positions 13 and 63 each coordinate Mn(2+). The Phosphoserine intermediate role is filled by serine 63. Substrate-binding positions include histidine 124, arginine 154 to aspartate 155, arginine 186, arginine 192, arginine 261 to arginine 264, and lysine 335. Mn(2+) is bound by residues aspartate 400, histidine 404, aspartate 441, histidine 442, and histidine 459.

This sequence belongs to the BPG-independent phosphoglycerate mutase family. In terms of assembly, monomer. Mn(2+) serves as cofactor.

It catalyses the reaction (2R)-2-phosphoglycerate = (2R)-3-phosphoglycerate. The protein operates within carbohydrate degradation; glycolysis; pyruvate from D-glyceraldehyde 3-phosphate: step 3/5. Its function is as follows. Catalyzes the interconversion of 2-phosphoglycerate and 3-phosphoglycerate. This Desulforudis audaxviator (strain MP104C) protein is 2,3-bisphosphoglycerate-independent phosphoglycerate mutase.